Consider the following 583-residue polypeptide: uncharacterized protein (583 aa).

24 to 140 (ILADIDDEQL…SAMLRAMARM (117 aa)) contributes to the a nucleoside 3',5'-cyclic phosphate binding site. The PNPLA domain occupies 309–469 (LVMAGGGARG…LNNLPANVMC (161 aa)). A GXGXXG motif is present at residues 313–318 (GGGARG). Positions 340–344 (GTSSG) match the GXSXG motif. S342 acts as the Nucleophile in catalysis. The Proton acceptor role is filled by D456. Positions 456–458 (DGG) match the DGA/G motif.

This sequence belongs to the NTE family.

This is an uncharacterized protein from Mycobacterium tuberculosis (strain CDC 1551 / Oshkosh).